A 467-amino-acid polypeptide reads, in one-letter code: Cysteine--tRNA ligase (467 aa).

Position 28 (Cys-28) interacts with Zn(2+). A 'HIGH' region motif is present at residues Ile-30–His-40. Residues Cys-211, His-236, and Glu-240 each contribute to the Zn(2+) site. The 'KMSKS' region signature appears at Lys-268–Ser-272. Lys-271 provides a ligand contact to ATP.

The protein belongs to the class-I aminoacyl-tRNA synthetase family. Zn(2+) serves as cofactor.

The protein localises to the cytoplasm. It carries out the reaction tRNA(Cys) + L-cysteine + ATP = L-cysteinyl-tRNA(Cys) + AMP + diphosphate. The sequence is that of Cysteine--tRNA ligase (cysS) from Archaeoglobus fulgidus (strain ATCC 49558 / DSM 4304 / JCM 9628 / NBRC 100126 / VC-16).